A 447-amino-acid chain; its full sequence is Tubulin beta chain (447 aa).

GTP-binding residues include glutamine 11, glutamate 69, serine 138, glycine 142, threonine 143, glycine 144, asparagine 204, and asparagine 226. Glutamate 69 serves as a coordination point for Mg(2+). The interval 424-447 is disordered; the sequence is QYQEASVSEGEEEYDEEAPLEGEE. The segment covering 432 to 447 has biased composition (acidic residues); sequence EGEEEYDEEAPLEGEE.

The protein belongs to the tubulin family. In terms of assembly, dimer of alpha and beta chains. A typical microtubule is a hollow water-filled tube with an outer diameter of 25 nm and an inner diameter of 15 nM. Alpha-beta heterodimers associate head-to-tail to form protofilaments running lengthwise along the microtubule wall with the beta-tubulin subunit facing the microtubule plus end conferring a structural polarity. Microtubules usually have 13 protofilaments but different protofilament numbers can be found in some organisms and specialized cells. It depends on Mg(2+) as a cofactor.

It is found in the cytoplasm. Its subcellular location is the cytoskeleton. Functionally, tubulin is the major constituent of microtubules, a cylinder consisting of laterally associated linear protofilaments composed of alpha- and beta-tubulin heterodimers. Microtubules grow by the addition of GTP-tubulin dimers to the microtubule end, where a stabilizing cap forms. Below the cap, tubulin dimers are in GDP-bound state, owing to GTPase activity of alpha-tubulin. The protein is Tubulin beta chain (TUB1) of Cercospora beticola (Sugarbeet leaf spot fungus).